Consider the following 196-residue polypeptide: Putative HTH-type transcriptional regulator in exeN 3'region (196 aa).

An HTH luxR-type domain is found at 120–185 (ASVGGDRLTR…ELFNLFLNHL (66 aa)). Positions 144–163 (TEAIAAALGIGNGTVKNHRK) form a DNA-binding region, H-T-H motif.

This is Putative HTH-type transcriptional regulator in exeN 3'region from Aeromonas salmonicida.